We begin with the raw amino-acid sequence, 390 residues long: Heme chaperone HemW (390 aa).

The Radical SAM core domain occupies 15 to 254 (PMPGQPFGVY…DARLSAAGFA (240 aa)). Y24 serves as a coordination point for S-adenosyl-L-methionine. The [4Fe-4S] cluster site is built by C30, C34, and C37. S-adenosyl-L-methionine contacts are provided by residues G82, 83–84 (GT), E115, Q142, R154, and D179.

Belongs to the anaerobic coproporphyrinogen-III oxidase family. HemW subfamily. [4Fe-4S] cluster serves as cofactor.

Its subcellular location is the cytoplasm. Functionally, probably acts as a heme chaperone, transferring heme to an unknown acceptor. Binds one molecule of heme per monomer, possibly covalently. Binds 1 [4Fe-4S] cluster. The cluster is coordinated with 3 cysteines and an exchangeable S-adenosyl-L-methionine. In Mycobacterium tuberculosis (strain CDC 1551 / Oshkosh), this protein is Heme chaperone HemW.